Consider the following 202-residue polypeptide: Large ribosomal subunit protein bL25 (202 aa).

Belongs to the bacterial ribosomal protein bL25 family. CTC subfamily. Part of the 50S ribosomal subunit; part of the 5S rRNA/L5/L18/L25 subcomplex. Contacts the 5S rRNA. Binds to the 5S rRNA independently of L5 and L18.

In terms of biological role, this is one of the proteins that binds to the 5S RNA in the ribosome where it forms part of the central protuberance. The chain is Large ribosomal subunit protein bL25 from Paramagnetospirillum magneticum (strain ATCC 700264 / AMB-1) (Magnetospirillum magneticum).